Here is a 2690-residue protein sequence, read N- to C-terminus: Non-reducing polyketide synthase pigA (2690 aa).

The Starter acyltransferase (SAT) domain maps to 96–211 (NILLSPLVVI…AELSRVLQDF (116 aa)). Cys140 functions as the Nucleophile; for transacylase activity in the catalytic mechanism. Catalysis depends on His258, which acts as the Proton donor/acceptor; for transacylase activity. The Ketosynthase family 3 (KS3) domain occupies 388 to 804 (ENDIAVIGMS…GSNASLIVTQ (417 aa)). Active-site for beta-ketoacyl synthase activity residues include Cys553, His688, and His727. Residues 915 to 1182 (FGGQISTFVG…VQRLAKQHPS (268 aa)) enclose the Malonyl-CoA:ACP transacylase (MAT) domain. Positions 1296-1426 (LTFVGYQDKD…GKVFFRSVDD (131 aa)) are N-terminal hotdog fold. The 307-residue stretch at 1296–1602 (LTFVGYQDKD…YAKVPKMSMS (307 aa)) folds into the PKS/mFAS DH domain. Residues 1323 to 1600 (LVSGHLIAQT…INYAKVPKMS (278 aa)) form a product template (PT) domain region. His1327 functions as the Proton acceptor; for dehydratase activity in the catalytic mechanism. Residues 1454-1602 (ADDIIQGRNI…YAKVPKMSMS (149 aa)) form a C-terminal hotdog fold region. The active-site Proton donor; for dehydratase activity is Asp1510. One can recognise a Carrier 1 domain in the interval 1657-1731 (PDISGKVRAM…GLLRCIQEAL (75 aa)). Residue Ser1691 is modified to O-(pantetheine 4'-phosphoryl)serine. The segment at 1731 to 1764 (LGPSEGVEEETDNEEGEDGESSENPSVFTPSDAA) is disordered. Residues 1736–1751 (GVEEETDNEEGEDGES) are compositionally biased toward acidic residues. Polar residues predominate over residues 1755–1764 (PSVFTPSDAA). The region spanning 1768–1842 (SSAKADVAEF…EFDVKVNGKS (75 aa)) is the Carrier 2 domain. Residue Ser1802 is modified to O-(pantetheine 4'-phosphoryl)serine. Positions 1948 to 2255 (QTLERIKYLP…EVNIQRIFLA (308 aa)) are methyltransferase domain. Residues 2320 to 2564 (VTGATGSLGS…LSWTPVNDVA (245 aa)) enclose the Thioester reductase (TE) domain.

Pantetheine 4'-phosphate is required as a cofactor.

It participates in secondary metabolite biosynthesis. Functionally, non-reducing polyketide synthase; part of the gene cluster that mediates the biosynthesis of azaphilone pigments (MonAzPs), a complex mixture of compounds with a common azaphilone skeleton very widely used as food colorants. PigA catalyzes the first step of MonAzPs biosynthesis and forms the hexaketide precursor from successive condensations of five malonyl-CoA units, with a simple acetyl-CoA starter unit. The starter acyl transferase (SAT) domain of pigA selects an acetyl-CoA starter unit, and the ketoacyl synthase (KS)-acyl transferase (AT)-acyl carrier protein (ACP) domains extend this starter unit five times with malonyl-CoA in five successive decarboxylative Claisen condensation cycles. The methyltransferase (MT) domain conducts a single C-methylation at C-4, most likely at the pentaketide stage. The reactive hexaketide chain then undergoes a product template (PT) domain-mediated C-2 to C-7 aldol cyclization to afford the first aromatic ring, followed by reductive release of the first pathway intermediate by the NADPH-dependent reductive release (R) domain. The role of esterase pigG is not clear, but it may play at most a supplementary role in the formation of the benzaldehyde produced by the pigA nrPKS. This very reactive benzaldehyde is intercepted by the pigC ketoreductase that to provide the first stable enzyme-free MonAzPs intermediate, 6-(4-hydroxy-2-oxopentyl)-3-methyl-2,4-dioxocyclohexane carbaldehyde, also known as M7PKS-1. The FAD-dependent monooxygenase pigN hydroxylates M7PKS-1 at C-4, which triggers the formation of the pyran ring. PigJ, pigK and pigD are involved in the acetylation of the pyran ring. PigJ and pigK form the two subunits of a dedicated fungal FAS that produces the side chain fatty acyl moiety of MonAzPs and pigD transfers the fatty acyl chain to the C-4 alcohol. PigM and pigO are involved in the elimination of the omega-1 alcohol. PigM acts as an O-acetyltransferase that synthesizes the putative O-11 acetyl intermediate whereas pigO eliminates acetic acid to yield an intermediate with a C10(11) double bond. The dehydration of the C-11 alcohol followed by the reduction of the C6(7) double bond by the NAD(P)H-dependent oxidoreductase pigE increases the electrophilicity of the C-5 ketone of the resulting acyl benzopyran. This in turn sets up the C-5 ketone for an intramolecular Knoevenagel aldol condensation with the C-20 enol of the side chain. This condensation affords the characteristic linear tricyclic carbon skeletons of the yellow pigments that serve as the common precursors for the classical yellow pigments monascin and ankaflavin, orange pigments rubopunctatin and monascorubrin, and red pigments ribropunctamine and monascorubramine. The FAD-dependent oxidoreductase pigF is especially invoved in the biosynthesis of orange and red pigments via desaturation of C6(7). This is Non-reducing polyketide synthase pigA from Monascus ruber (Mold).